Here is a 360-residue protein sequence, read N- to C-terminus: D-alanine--D-alanine ligase (360 aa).

An ATP-grasp domain is found at 146-352; sequence KLCVADAGIA…YRNLITRLLE (207 aa). 179 to 234 contacts ATP; it reads EAQVSYPLFVKPASLGSSIGISKVHNREELHPALQAACALDWKVVVESTVKGREIE. D305, E319, and N321 together coordinate Mg(2+).

The protein belongs to the D-alanine--D-alanine ligase family. Requires Mg(2+) as cofactor. Mn(2+) is required as a cofactor.

The protein resides in the cytoplasm. The catalysed reaction is 2 D-alanine + ATP = D-alanyl-D-alanine + ADP + phosphate + H(+). The protein operates within cell wall biogenesis; peptidoglycan biosynthesis. In terms of biological role, cell wall formation. This is D-alanine--D-alanine ligase from Chlorobium chlorochromatii (strain CaD3).